Consider the following 393-residue polypeptide: uncharacterized protein (393 aa).

This is an uncharacterized protein from Treponema pallidum (strain Nichols).